The sequence spans 807 residues: Centrosomal protein of 97 kDa (807 aa).

LRR repeat units follow at residues 34–55, 56–77, 78–99, 100–121, 122–143, 144–165, and 168–189; these read DTQT…EKCR, NLVQ…AKLI, HLRV…KDLV, HLEW…NSST, SLQH…SKLK, SLKT…SACL, and SLTI…AFLA. Positions 208-246 constitute an LRRCT domain; the sequence is TPSIPGFDYRPFIVSWCLNLKVLDGYVVSQKESLKAEWL. The disordered stretch occupies residues 306–330; it reads RSDGYLTSSTPNKRLPLSTEHHSPT. The 30-residue stretch at 519 to 548 folds into the IQ domain; that stretch reads ISKAATKLQSCWRGFYARKYNPKVKDVCYE. Residues 607–623 show a composition bias toward polar residues; the sequence is TANSSENDLPSASNSKH. Positions 607-756 are disordered; it reads TANSSENDLP…RPEITTCSDN (150 aa). Over residues 681-690 the composition is skewed to basic and acidic residues; sequence TGRHYNDKVP. Positions 704 to 724 are enriched in polar residues; the sequence is SQSSKDSFTSEQDSSLLQQYL.

Its subcellular location is the cytoplasm. It is found in the cytoskeleton. The protein localises to the microtubule organizing center. The protein resides in the centrosome. Functionally, acts as a key negative regulator of ciliogenesis in collaboration with ccp110 by capping the mother centriole thereby preventing cilia formation. Required for recruitment of ccp110 to the centrosome. The polypeptide is Centrosomal protein of 97 kDa (cep97) (Xenopus laevis (African clawed frog)).